Here is a 275-residue protein sequence, read N- to C-terminus: Nitrogenase iron protein 1 (275 aa).

9 to 16 (GKGGIGKS) lines the ATP pocket. Cysteine 97 contacts [4Fe-4S] cluster. At arginine 100 the chain carries ADP-ribosylarginine; by dinitrogenase reductase ADP-ribosyltransferase. A [4Fe-4S] cluster-binding site is contributed by cysteine 132.

This sequence belongs to the NifH/BchL/ChlL family. Homodimer. It depends on [4Fe-4S] cluster as a cofactor. Post-translationally, the reversible ADP-ribosylation of Arg-100 inactivates the nitrogenase reductase and regulates nitrogenase activity.

It catalyses the reaction N2 + 8 reduced [2Fe-2S]-[ferredoxin] + 16 ATP + 16 H2O = H2 + 8 oxidized [2Fe-2S]-[ferredoxin] + 2 NH4(+) + 16 ADP + 16 phosphate + 6 H(+). In terms of biological role, the key enzymatic reactions in nitrogen fixation are catalyzed by the nitrogenase complex, which has 2 components: the iron protein and the molybdenum-iron protein. The polypeptide is Nitrogenase iron protein 1 (nifH1) (Methanosarcina barkeri).